A 114-amino-acid polypeptide reads, in one-letter code: Putative antiporter subunit mnhC2 (114 aa).

3 helical membrane passes run 3–23, 28–48, and 72–92; these read LILLLVIGFLVFIGTYMILSI, IVIGISIYTHAGNLIIMSMGT, and AIVLTAIVIGFGMTAFLLVLV.

It belongs to the CPA3 antiporters (TC 2.A.63) subunit C family. May form a heterooligomeric complex that consists of seven subunits: mnhA2, mnhB2, mnhC2, mnhD2, mnhE2, mnhF2 and mnhG2.

It localises to the cell membrane. The sequence is that of Putative antiporter subunit mnhC2 (mnhC2) from Staphylococcus aureus (strain MRSA252).